The chain runs to 417 residues: NADH-quinone oxidoreductase subunit D (417 aa).

Belongs to the complex I 49 kDa subunit family. In terms of assembly, NDH-1 is composed of 14 different subunits. Subunits NuoB, C, D, E, F, and G constitute the peripheral sector of the complex.

The protein resides in the cell inner membrane. It catalyses the reaction a quinone + NADH + 5 H(+)(in) = a quinol + NAD(+) + 4 H(+)(out). Functionally, NDH-1 shuttles electrons from NADH, via FMN and iron-sulfur (Fe-S) centers, to quinones in the respiratory chain. The immediate electron acceptor for the enzyme in this species is believed to be ubiquinone. Couples the redox reaction to proton translocation (for every two electrons transferred, four hydrogen ions are translocated across the cytoplasmic membrane), and thus conserves the redox energy in a proton gradient. The chain is NADH-quinone oxidoreductase subunit D from Nitrosomonas europaea (strain ATCC 19718 / CIP 103999 / KCTC 2705 / NBRC 14298).